A 136-amino-acid chain; its full sequence is Nucleoside diphosphate kinase (136 aa).

Residues Lys-10, Phe-58, Arg-86, Thr-92, Arg-104, and Asn-114 each coordinate ATP. The Pros-phosphohistidine intermediate role is filled by His-117.

This sequence belongs to the NDK family. In terms of assembly, homotetramer. It depends on Mg(2+) as a cofactor.

Its subcellular location is the cytoplasm. It carries out the reaction a 2'-deoxyribonucleoside 5'-diphosphate + ATP = a 2'-deoxyribonucleoside 5'-triphosphate + ADP. It catalyses the reaction a ribonucleoside 5'-diphosphate + ATP = a ribonucleoside 5'-triphosphate + ADP. Functionally, major role in the synthesis of nucleoside triphosphates other than ATP. The ATP gamma phosphate is transferred to the NDP beta phosphate via a ping-pong mechanism, using a phosphorylated active-site intermediate. This Mycolicibacterium vanbaalenii (strain DSM 7251 / JCM 13017 / BCRC 16820 / KCTC 9966 / NRRL B-24157 / PYR-1) (Mycobacterium vanbaalenii) protein is Nucleoside diphosphate kinase.